The chain runs to 869 residues: MSSCKTTLSEMVGSVTKDRGTINVEARTRSSNVTFKPPVTHDMVRSLFDPTLKKSLLEKCIALAIISNFFICYWVFQRFGLQFTKYFFLVQYLFWRIAYNLGIGLVLHYQSHYETLTNCAKTHAIFSKIPQNKDANSNFSTNSNSFSEKFWNFIRKFCQYEIRSKMPKEYDLFAYPEEINVWLIFRQFVDLILMQDFVTYIIYVYLSIPYSWVQIFNWRSLLGVILILFNIWVKLDAHRVVKDYAWYWGDFFFLEESELIFDGVFNISPHPMYSIGYLGYYGLSLICNDYKVLLVSVFGHYSQFLFLKYVENPHIERTYGDGTDSDSQMNSRIDDLISKENYDYSRPLINMGLSFNNFNKLRFTDYFTIGTVAALMLGTIMNARFINLNYLFITVFVTKLVSWLFISTILYKQSQSKWFTRLFLENGYTQVYSYEQWQFIYNYYLVLTYTLMIIHTGLQIWSNFSNINNSQLIFGLILVALQTWCDKETRLAISDFGWFYGDFFLSNYISTRKLTSQGIYRYLNHPEAVLGVVGVWGTVLMTNFAVTNIILAVLWTLTNFILVKFIETPHVNKIYGKTKRVSGVGKTLLGLKPLRQVSDIVNRIENIIIKSLVDESKNSNGGAELLPKNYQDNKEWNILIQEAMDSVATRLSPYCELKIENEQVETNFVLPTPVTLNWKMPIELYNGDDWIGLYKVIDTRADREKTRVGSGGHWSATSKDSYMNHGLRHKESVTEIKATEKYVQGKVTFDTSLLYFENGIYEFRYHSGNSHKVLLISTPFEISLPVLNTTTPELFEKDLTEFLTKVNVLKDGKFRPLGNKFFGMDSLKQLIKNSIGVELSSEYMRRVNGDAHVISHRAWDIKQTLDSLA.

S2 is subject to N-acetylserine. The Lumenal portion of the chain corresponds to 2-55 (SSCKTTLSEMVGSVTKDRGTINVEARTRSSNVTFKPPVTHDMVRSLFDPTLKKS). Residues 56–76 (LLEKCIALAIISNFFICYWVF) form a helical membrane-spanning segment. At 77-86 (QRFGLQFTKY) the chain is on the cytoplasmic side. The helical transmembrane segment at 87–107 (FFLVQYLFWRIAYNLGIGLVL) threads the bilayer. The Lumenal segment spans residues 108 to 187 (HYQSHYETLT…EINVWLIFRQ (80 aa)). A helical membrane pass occupies residues 188-208 (FVDLILMQDFVTYIIYVYLSI). Topologically, residues 209-212 (PYSW) are cytoplasmic. A helical transmembrane segment spans residues 213–233 (VQIFNWRSLLGVILILFNIWV). Over 234 to 258 (KLDAHRVVKDYAWYWGDFFFLEESE) the chain is Lumenal. Residues 259-279 (LIFDGVFNISPHPMYSIGYLG) form a helical membrane-spanning segment. Residues 280-291 (YYGLSLICNDYK) lie on the Cytoplasmic side of the membrane. A helical transmembrane segment spans residues 292-310 (VLLVSVFGHYSQFLFLKYV). At 311-362 (ENPHIERTYGDGTDSDSQMNSRIDDLISKENYDYSRPLINMGLSFNNFNKLR) the chain is on the lumenal side. A helical membrane pass occupies residues 363-383 (FTDYFTIGTVAALMLGTIMNA). Over 384–389 (RFINLN) the chain is Cytoplasmic. Residues 390 to 410 (YLFITVFVTKLVSWLFISTIL) traverse the membrane as a helical segment. Topologically, residues 411-439 (YKQSQSKWFTRLFLENGYTQVYSYEQWQF) are lumenal. Residues 440 to 460 (IYNYYLVLTYTLMIIHTGLQI) traverse the membrane as a helical segment. The Cytoplasmic portion of the chain corresponds to 461-463 (WSN). Residues 464–484 (FSNINNSQLIFGLILVALQTW) form a helical membrane-spanning segment. Over 485–534 (CDKETRLAISDFGWFYGDFFLSNYISTRKLTSQGIYRYLNHPEAVLGVVG) the chain is Lumenal. A helical membrane pass occupies residues 535 to 555 (VWGTVLMTNFAVTNIILAVLW). The Cytoplasmic portion of the chain corresponds to 556 to 869 (TLTNFILVKF…DIKQTLDSLA (314 aa)).

This sequence belongs to the class VI-like SAM-binding methyltransferase superfamily. CHO2 family.

The protein resides in the endoplasmic reticulum membrane. It carries out the reaction a 1,2-diacyl-sn-glycero-3-phosphoethanolamine + S-adenosyl-L-methionine = a 1,2-diacyl-sn-glycero-3-phospho-N-methylethanolamine + S-adenosyl-L-homocysteine + H(+). It participates in phospholipid metabolism; phosphatidylcholine biosynthesis. Catalyzes the first step of the methylation pathway of phosphatidylcholine biosynthesis, the SAM-dependent methylation of phosphatidylethanolamine (PE) to phosphatidylmonomethylethanolamine (PMME). Preferentially converts di-C16:1 substrates. The sequence is that of Phosphatidylethanolamine N-methyltransferase from Saccharomyces cerevisiae (strain ATCC 204508 / S288c) (Baker's yeast).